We begin with the raw amino-acid sequence, 516 residues long: Protein phosphatase 1H (516 aa).

Disordered regions lie at residues 102-122 and 181-202; these read ADPS…PSGD and PPTC…SGSQ. Residues 106 to 506 enclose the PPM-type phosphatase domain; that stretch reads SVSYTPSRRR…DDISVFIIPL (401 aa). Polar residues predominate over residues 190–202; it reads PNPQLHASASGSQ.

This sequence belongs to the PP2C family.

The protein localises to the nucleus. The protein resides in the cytoplasm. It catalyses the reaction O-phospho-L-seryl-[protein] + H2O = L-seryl-[protein] + phosphate. It carries out the reaction O-phospho-L-threonyl-[protein] + H2O = L-threonyl-[protein] + phosphate. The sequence is that of Protein phosphatase 1H (ppm1h) from Danio rerio (Zebrafish).